The chain runs to 754 residues: FAD-dependent monooxygenase ntnA (754 aa).

The helical transmembrane segment at 3–23 (IPFKVLIIGGGVAGLTLAIML) threads the bilayer. Positions 34, 48, and 109 each coordinate FAD. Residue Tyr218 is part of the active site. 2 residues coordinate FAD: Asp311 and Ala324. A run of 4 helical transmembrane segments spans residues 446–466 (PLAT…PWLA), 486–506 (AEVL…MWVI), 536–556 (ILPI…YYYM), and 563–583 (LGVA…SAVC). Asn586 is a glycosylation site (N-linked (GlcNAc...) asparagine). A helical transmembrane segment spans residues 595–615 (SWWFTADFAFPVVAYLSGMFL). Asn616 carries an N-linked (GlcNAc...) asparagine glycan. The next 2 helical transmembrane spans lie at 644 to 664 (IAFV…TTIL) and 679 to 697 (LASL…AWEL). A glycan (N-linked (GlcNAc...) asparagine) is linked at Asn701. Residues 712–732 (LTILSSTIFGGPAATLAGTFI) traverse the membrane as a helical segment.

Belongs to the paxM FAD-dependent monooxygenase family. FAD serves as cofactor.

It localises to the membrane. It functions in the pathway secondary metabolite biosynthesis; terpenoid biosynthesis. FAD-dependent monooxygenase; part of the gene cluster that mediates the biosynthesis of the meroterpenoids nectripenoids A and B, as well as cochliquninone D and isocochliquninone E. The pathway probably begins with the HR-PKS ntnH that catalyzes two chain-extension steps to form a reduced triketide, which then primes the SAT domain in the NR-PKS ntnG to initiate three more cycles of extension to give a linear hexaketide corresponding to the polyketide part of nectripenoids. The FAD-dependent monooxygenase ntnJ then performs an oxidative decarboxylation at C11 of the ntnH/ntnG product, via an electrophilic aromatic hydroxylation with concomitant ipso-decarboxylation. The membrane-bound polyprenyl transferase ntnF then introduces a farnesyl group before the FAD-dependent monooxygenase ntnK functions as the first epoxidase on terminal C12'-C13' olefin, followed by a second epoxidation on C7'-C8' catalyzed by ntnA. The terpene cyclase/mutase ntnI then initiates the sequential tricyclic ring formation through protonation of the terminal epoxide and catalyzes the regioselective and stereoselective 6/6/6-tricyclic ring formation. The cytochrome P450 monooxygenase ntnM may then hydroxylate C1'. The protein is FAD-dependent monooxygenase ntnA of Nectria sp.